Reading from the N-terminus, the 449-residue chain is Phosphoglucosamine mutase (449 aa).

Ser-104 functions as the Phosphoserine intermediate in the catalytic mechanism. Residues Ser-104, Asp-243, Asp-245, and Asp-247 each contribute to the Mg(2+) site. Ser-104 bears the Phosphoserine mark.

It belongs to the phosphohexose mutase family. Requires Mg(2+) as cofactor. In terms of processing, activated by phosphorylation.

It catalyses the reaction alpha-D-glucosamine 1-phosphate = D-glucosamine 6-phosphate. Functionally, catalyzes the conversion of glucosamine-6-phosphate to glucosamine-1-phosphate. This Xanthomonas campestris pv. campestris (strain 8004) protein is Phosphoglucosamine mutase.